The following is a 490-amino-acid chain: Cytochrome P450 90D2 (490 aa).

Residues alanine 4–leucine 24 traverse the membrane as a helical segment. Residue cysteine 437 coordinates heme.

This sequence belongs to the cytochrome P450 family. Heme is required as a cofactor. In terms of tissue distribution, expressed at low levels leaf blades, shoot apex and elongating stem.

The protein localises to the membrane. The catalysed reaction is 6-deoxoteasterone + reduced [NADPH--hemoprotein reductase] + O2 = 3-dehydro-6-deoxoteasterone + oxidized [NADPH--hemoprotein reductase] + 2 H2O + H(+). Its pathway is plant hormone biosynthesis; brassinosteroid biosynthesis. Catalyzes the C6-oxidation step in brassinosteroids biosynthesis. May convert 6-deoxoteasterone (6-deoxoTE) to 3-dehydro-6-deoxoteasterone (6-deoxo3DT, 6-deoxo3DHT), and teasterone (TE) to 3-dehydroteasterone (3DT, 3-DHT). Involved in the elongation of leaf sheaths and stems. This chain is Cytochrome P450 90D2, found in Oryza sativa subsp. japonica (Rice).